Here is a 260-residue protein sequence, read N- to C-terminus: NifU-like protein C1709.19c (260 aa).

Positions 161 to 231 (IKELIETSIR…IPEVENVVQV (71 aa)) are nifU.

Belongs to the NifU family.

This is NifU-like protein C1709.19c from Schizosaccharomyces pombe (strain 972 / ATCC 24843) (Fission yeast).